The chain runs to 63 residues: Trypsin inhibitor 5 (63 aa).

Positions 1–21 (MASVAESSGVVEVIELISDGG) are cleaved as a signal peptide. A propeptide spanning residues 22-34 (NDLPRKIMSGRHG) is cleaved from the precursor. Cystine bridges form between cysteine 37–cysteine 54, cysteine 44–cysteine 56, and cysteine 50–cysteine 62.

Belongs to the protease inhibitor I7 (squash-type serine protease inhibitor) family.

The protein resides in the secreted. In terms of biological role, inhibits trypsin. This Luffa aegyptiaca (Sponge gourd) protein is Trypsin inhibitor 5.